The following is a 191-amino-acid chain: Calcium and integrin-binding protein 1 (191 aa).

Residue Gly-2 is the site of N-myristoyl glycine attachment. 2 EF-hand domains span residues 103 to 138 (TPDI…LTGE) and 148 to 183 (EMKQ…SPDF). Positions 116, 118, 120, 122, 127, 161, 163, 165, 167, and 172 each coordinate Ca(2+).

In terms of assembly, monomer. Interacts with the heterodimeric integrin alpha-IIb/beta3 (ITGA2B-ITGB3). Interacts with ITGA2B (via cytoplasmic domain); the interaction is direct and calcium-dependent. Interacts with the protein kinases PLK2/SNK and PRKDC (via the region immediately upstream of the kinase domain). Interacts with PLK3; the interaction inhibits PLK3 kinase activity. Interacts with PSEN2. Interacts (via C-terminus) with F8. Interacts with NBR1 (via C-terminus). Interacts with FEZ1 (via C-terminus). Interacts with UBR5 (via C-terminus); the interaction is sensitive to DNA damage, and may target CIB1 for ubiquitin-mediated degradation. Interacts with IFI6; the interaction is direct. Interacts with BCL2. Interacts with ITPR3; the interaction occurs in a calcium dependent manner. Interacts with PTK2/FAK1. Interacts with MAP3K5; the interaction inhibits MAP3K5 activation by phosphorylation, and its subsequent interaction with TRAF2. Interacts (via C-terminal region) with STMN2 (via the N-terminal region); the interaction is direct, occurs in a calcium-dependent manner and attenuates the STMN2-induced neurite outgrowth inhibition. Interacts with SPHK1, the interaction occurs in a calcium-dependent manner. Interacts with ITGA2B (via C-terminal cytoplasmic tail); the interaction occurs upon platelet aggregation and is stabilized/increased in a calcium and magnesium-dependent manner. Interacts with PAK1 (via N-terminal region); the interaction is direct and occurs in a calcium-dependent manner. Interacts with RAC3 (via C-terminal region); the interaction induces their association with the cytoskeleton upon alpha-IIb/beta3 integrin-mediated adhesion. Interacts with ITGA5 and ITGAV. Interacts with MYO1C. Interacts with ITGA2B (via C-terminal cytoplasmic tail region). Interacts (via C-terminal region) with PPP3R1; the interaction increases upon cardiomyocytes hypertrophy. Interacts with CACNA1C; the interaction increases upon cardiomyocytes hypertrophy. Interacts with TAS1R2 (via C-terminus); this interaction is independent of the myristoylation state of CIB1. Interacts and forms a complex with TMC6 and TMC8; the interaction stabilizes each component of the complex. Expressed in cardiomyocytes and neurons (at protein level). Expressed during early neural development.

It localises to the membrane. The protein localises to the cell membrane. Its subcellular location is the sarcolemma. The protein resides in the apical cell membrane. It is found in the cell projection. It localises to the ruffle membrane. The protein localises to the filopodium tip. Its subcellular location is the growth cone. The protein resides in the lamellipodium. It is found in the cytoplasm. It localises to the cytoskeleton. The protein localises to the microtubule organizing center. Its subcellular location is the centrosome. The protein resides in the perinuclear region. It is found in the nucleus. It localises to the neuron projection. The protein localises to the perikaryon. Its function is as follows. Calcium-binding protein that plays a role in the regulation of numerous cellular processes, such as cell differentiation, cell division, cell proliferation, cell migration, thrombosis, angiogenesis, cardiac hypertrophy and apoptosis. Involved in bone marrow megakaryocyte differentiation by negatively regulating thrombopoietin-mediated signaling pathway. Participates in the endomitotic cell cycle of megakaryocyte, a form of mitosis in which both karyokinesis and cytokinesis are interrupted. Plays a role in integrin signaling by negatively regulating alpha-IIb/beta3 activation in thrombin-stimulated megakaryocytes preventing platelet aggregation. Up-regulates PTK2/FAK1 activity, and is also needed for the recruitment of PTK2/FAK1 to focal adhesions; it thus appears to play an important role in focal adhesion formation. Positively regulates cell migration on fibronectin in a CDC42-dependent manner, the effect being negatively regulated by PAK1. Functions as a negative regulator of stress activated MAP kinase (MAPK) signaling pathways. Down-regulates inositol 1,4,5-trisphosphate receptor-dependent calcium signaling. Involved in sphingosine kinase SPHK1 translocation to the plasma membrane in a N-myristoylation-dependent manner preventing TNF-alpha-induced apoptosis. Regulates serine/threonine-protein kinase PLK3 activity for proper completion of cell division progression. Plays a role in microtubule (MT) dynamics during neuronal development; disrupts the MT depolymerization activity of STMN2 attenuating NGF-induced neurite outgrowth and the MT reorganization at the edge of lamellipodia. Promotes cardiomyocyte hypertrophy via activation of the calcineurin/NFAT signaling pathway. Stimulates calcineurin PPP3R1 activity by mediating its anchoring to the sarcolemma. In ischemia-induced (pathological or adaptive) angiogenesis, stimulates endothelial cell proliferation, migration and microvessel formation by activating the PAK1 and ERK1/ERK2 signaling pathway. Also promotes cancer cell survival and proliferation. May regulate cell cycle and differentiation of spermatogenic germ cells, and/or differentiation of supporting Sertoli cells. Forms a complex with TMC6/EVER1 and TMC8/EVER2 in lymphocytes and keratynocytes where CIB1 stabilizes TMC6 and TMC8 levels and reciprocally. This is Calcium and integrin-binding protein 1 (Cib1) from Rattus norvegicus (Rat).